Here is a 331-residue protein sequence, read N- to C-terminus: MAAQMYYDDDADLNIIQGRTVAVIGYGSQGHAHALSLRDSGVDVRVGLPESSKSRAKAEEDGLRVVTPAEAAQEADLIMILVPDHIHRDLYANEIAPHLNEGDALFFGHGFSIRYGLITPPEGVDVAMVAPKGPGHLVRRQFEAGRGVPVLVAVEKDASGSAWDLALSYAKAIGGTRAGALKTTFKEETETDLFGEQAVLCGGVSELIKAGFATLVEAGYQPEVAYFECLHEMKLIVDLMYEGGISKMYWSVSDNAEYGGYTRGPRVITESTREEMRKILQEVQDGTYAKELVEEFDKGRPNFLKRREAEQGEQIEKVGTELRSLMSWLKN.

A KARI N-terminal Rossmann domain is found at 3 to 183; that stretch reads AQMYYDDDAD…GGTRAGALKT (181 aa). NADP(+) contacts are provided by residues 26–29, Ser-52, and Ser-54; that span reads YGSQ. His-109 is a catalytic residue. Gly-135 is a binding site for NADP(+). The KARI C-terminal knotted domain occupies 184 to 329; the sequence is TFKEETETDL…TELRSLMSWL (146 aa). The Mg(2+) site is built by Asp-192, Glu-196, Glu-228, and Glu-232. Residue Ser-253 participates in substrate binding.

The protein belongs to the ketol-acid reductoisomerase family. Mg(2+) is required as a cofactor.

It catalyses the reaction (2R)-2,3-dihydroxy-3-methylbutanoate + NADP(+) = (2S)-2-acetolactate + NADPH + H(+). The catalysed reaction is (2R,3R)-2,3-dihydroxy-3-methylpentanoate + NADP(+) = (S)-2-ethyl-2-hydroxy-3-oxobutanoate + NADPH + H(+). Its pathway is amino-acid biosynthesis; L-isoleucine biosynthesis; L-isoleucine from 2-oxobutanoate: step 2/4. It participates in amino-acid biosynthesis; L-valine biosynthesis; L-valine from pyruvate: step 2/4. In terms of biological role, involved in the biosynthesis of branched-chain amino acids (BCAA). Catalyzes an alkyl-migration followed by a ketol-acid reduction of (S)-2-acetolactate (S2AL) to yield (R)-2,3-dihydroxy-isovalerate. In the isomerase reaction, S2AL is rearranged via a Mg-dependent methyl migration to produce 3-hydroxy-3-methyl-2-ketobutyrate (HMKB). In the reductase reaction, this 2-ketoacid undergoes a metal-dependent reduction by NADPH to yield (R)-2,3-dihydroxy-isovalerate. The chain is Ketol-acid reductoisomerase (NADP(+)) from Thermobifida fusca (strain YX).